The primary structure comprises 473 residues: Photosystem II CP43 reaction center protein (473 aa).

Positions 1-14 are excised as a propeptide; it reads MKTLYSLRRFYPVE. Residue Thr15 is modified to N-acetylthreonine. Position 15 is a phosphothreonine (Thr15). 5 consecutive transmembrane segments (helical) span residues 69–93, 134–155, 178–200, 255–275, and 291–312; these read LFEV…PHLA, LLGP…KDRN, KALY…RRIT, KPFA…LSYS, and WFNN…ASQA. Glu367 contributes to the [CaMn4O5] cluster binding site. The helical transmembrane segment at 447-471 threads the bilayer; sequence RARAAAAGFEKGIDRDFEPVLSMTP.

This sequence belongs to the PsbB/PsbC family. PsbC subfamily. As to quaternary structure, PSII is composed of 1 copy each of membrane proteins PsbA, PsbB, PsbC, PsbD, PsbE, PsbF, PsbH, PsbI, PsbJ, PsbK, PsbL, PsbM, PsbT, PsbX, PsbY, PsbZ, Psb30/Ycf12, at least 3 peripheral proteins of the oxygen-evolving complex and a large number of cofactors. It forms dimeric complexes. It depends on Binds multiple chlorophylls and provides some of the ligands for the Ca-4Mn-5O cluster of the oxygen-evolving complex. It may also provide a ligand for a Cl- that is required for oxygen evolution. PSII binds additional chlorophylls, carotenoids and specific lipids. as a cofactor.

The protein localises to the plastid. Its subcellular location is the chloroplast thylakoid membrane. In terms of biological role, one of the components of the core complex of photosystem II (PSII). It binds chlorophyll and helps catalyze the primary light-induced photochemical processes of PSII. PSII is a light-driven water:plastoquinone oxidoreductase, using light energy to abstract electrons from H(2)O, generating O(2) and a proton gradient subsequently used for ATP formation. The protein is Photosystem II CP43 reaction center protein of Illicium oligandrum (Star anise).